The chain runs to 185 residues: MRRKVRRLTLAVSALVALFPAVAGCSDSGDNKPGATIPSTPANAEGRHGPFFPQCGGVSDQTVTELTRVTGLVNTAKNSVGCQWLAGGGILGPHFSFSWYRGSPIGRERKTEELSRASVEDINIDGHSGFIAIGNEPSLGDSLCEVGIQFSDDFIEWSVSFSQKPFPLPCDIAKELTRQSIANSK.

Residues 1-24 form the signal peptide; the sequence is MRRKVRRLTLAVSALVALFPAVAG. A lipid anchor (N-palmitoyl cysteine) is attached at cysteine 25. Cysteine 25 is lipidated: S-diacylglycerol cysteine. A disordered region spans residues 26–50; that stretch reads SDSGDNKPGATIPSTPANAEGRHGP.

The protein resides in the cell membrane. In Mycobacterium tuberculosis (strain CDC 1551 / Oshkosh), this protein is Putative lipoprotein LprB (lprB).